The sequence spans 294 residues: MTKLKKVMISVIAATLLLLAGCGSSAVVKTDAGSVTQDELYEAMKTTYGNEVVQQLTFKKILEDKYTVTEKEVNAEYKKYEEQYGDSFESTLSSNNLTKTSFKENLEYNLLVQKATEANMNVSESKLKTYYKTWEPDITVRHILVDDEATAKEIQTKLKNGEKFTDLAKEYSTDTATSTNGGLLDPFGPGEMDETFEKAAYALENKDDVSGIVKSTYGYHLIQLVKKTEKGTYAKEKANVKAAYIESQLTTENMTAALKKELKAANIDIKDSDLKDAFADYTSTSSTSSTTTSN.

The signal sequence occupies residues 1-21 (MTKLKKVMISVIAATLLLLAG). Cysteine 22 is lipidated: N-palmitoyl cysteine. A lipid anchor (S-diacylglycerol cysteine) is attached at cysteine 22. The PpiC domain occupies 135–226 (EPDITVRHIL…YGYHLIQLVK (92 aa)).

Belongs to the PrsA family.

Its subcellular location is the cell membrane. The catalysed reaction is [protein]-peptidylproline (omega=180) = [protein]-peptidylproline (omega=0). Its function is as follows. Plays a major role in protein secretion by helping the post-translocational extracellular folding of several secreted proteins. In Listeria monocytogenes serotype 4b (strain F2365), this protein is Foldase protein PrsA 1.